We begin with the raw amino-acid sequence, 29 residues long: Omega-conotoxin MVIIC (29 aa).

Residues 1–2 (TR) constitute a propeptide that is removed on maturation. 3 disulfide bridges follow: C3-C18, C10-C22, and C17-C28. Cysteine amide is present on C28.

The protein belongs to the conotoxin O1 superfamily. Post-translationally, not hydroxylated; hydroxylation, on a synthetic hydroxylated MVIIC, has a significant impact on the oxidative folding but not on the biological activity. In terms of tissue distribution, expressed by the venom duct.

Its subcellular location is the secreted. Omega-conotoxins act at presynaptic membranes, they bind and block voltage-gated calcium channels (Cav). This toxin preferentially blocks P/Q-type calcium channels (Cav2.1/CACNA1A) (IC(50)=0.60 nM). Also shows an inhibition on Cav2.2/CACNA1A channels (IC(50)=7.0 nM). This Conus magus (Magical cone) protein is Omega-conotoxin MVIIC.